The following is a 127-amino-acid chain: Fluoride-specific ion channel FluC 1 (127 aa).

4 helical membrane passes run 4 to 24 (TLLAVFIGGGVGSMARWLVSL), 35 to 55 (VGTLIVNLVGAFIIGLTLAFF), 71 to 91 (TGFCGGLTTFSTFSVEVVYLI), and 101 to 121 (GTILLNVAGSLAMTMLAFILV). Residues glycine 75 and threonine 78 each contribute to the Na(+) site.

Belongs to the fluoride channel Fluc/FEX (TC 1.A.43) family.

The protein resides in the cell inner membrane. The catalysed reaction is fluoride(in) = fluoride(out). Na(+) is not transported, but it plays an essential structural role and its presence is essential for fluoride channel function. Fluoride-specific ion channel. Important for reducing fluoride concentration in the cell, thus reducing its toxicity. The sequence is that of Fluoride-specific ion channel FluC 1 from Yersinia pestis.